Here is a 311-residue protein sequence, read N- to C-terminus: Probable manganese-dependent inorganic pyrophosphatase (311 aa).

Mn(2+) is bound by residues H9, D13, D15, D77, H99, and D151.

This sequence belongs to the PPase class C family. Requires Mn(2+) as cofactor.

It localises to the cytoplasm. It carries out the reaction diphosphate + H2O = 2 phosphate + H(+). The polypeptide is Probable manganese-dependent inorganic pyrophosphatase (Streptococcus sanguinis (strain SK36)).